The following is a 1122-amino-acid chain: TSET complex member tstF (1122 aa).

Residues 88 to 126 (SSSASGINGTNNNNSGSNSSNNNNNNNGSLSNSPNNNNN) are compositionally biased toward low complexity. Disordered regions lie at residues 88 to 131 (SSSA…AFIG) and 178 to 215 (QTLH…STNS). A compositionally biased stretch (polar residues) spans 178–190 (QTLHNRSPNNTIK). Low complexity predominate over residues 191 to 215 (LSPNSSNNDSLNNNNNNINNNSTNS). WD repeat units lie at residues 298–337 (FENK…IEKQ), 342–381 (PKGT…LATQ), and 383–422 (SKVH…EVSK). The disordered stretch occupies residues 731–775 (NGSVGGSSSNNSANSNNSNNNNNNNNNNSNNSNNNNNSSQPILEP).

As to quaternary structure, component of the TSET complex, a heterohexamer composed of tstA, tstB, tstC, tstD, tstE and tstF, which may act in plasma membrane turnover. tstA, tstB, tstC and tstD are likely to be the core complex members with tstE and tstF acting as associated scaffold proteins.

This Dictyostelium discoideum (Social amoeba) protein is TSET complex member tstF.